Consider the following 375-residue polypeptide: GDSL esterase/lipase At5g45960 (375 aa).

The N-terminal stretch at 1-28 (MRSHHRHFSSYVSFILFLFLFFISFSSS) is a signal peptide. Ser54 functions as the Nucleophile in the catalytic mechanism. Asn340 is a glycosylation site (N-linked (GlcNAc...) asparagine). Catalysis depends on residues Asp348 and His351.

This sequence belongs to the 'GDSL' lipolytic enzyme family.

Its subcellular location is the secreted. This Arabidopsis thaliana (Mouse-ear cress) protein is GDSL esterase/lipase At5g45960.